A 571-amino-acid polypeptide reads, in one-letter code: Proline--tRNA ligase (571 aa).

This sequence belongs to the class-II aminoacyl-tRNA synthetase family. ProS type 1 subfamily. In terms of assembly, homodimer.

The protein localises to the cytoplasm. It catalyses the reaction tRNA(Pro) + L-proline + ATP = L-prolyl-tRNA(Pro) + AMP + diphosphate. In terms of biological role, catalyzes the attachment of proline to tRNA(Pro) in a two-step reaction: proline is first activated by ATP to form Pro-AMP and then transferred to the acceptor end of tRNA(Pro). As ProRS can inadvertently accommodate and process non-cognate amino acids such as alanine and cysteine, to avoid such errors it has two additional distinct editing activities against alanine. One activity is designated as 'pretransfer' editing and involves the tRNA(Pro)-independent hydrolysis of activated Ala-AMP. The other activity is designated 'posttransfer' editing and involves deacylation of mischarged Ala-tRNA(Pro). The misacylated Cys-tRNA(Pro) is not edited by ProRS. This is Proline--tRNA ligase from Mannheimia succiniciproducens (strain KCTC 0769BP / MBEL55E).